Here is a 356-residue protein sequence, read N- to C-terminus: Ubiquitin-conjugating enzyme E2 Z (356 aa).

Low complexity predominate over residues 1–16 (MAESPTEEAATATAGA). The disordered stretch occupies residues 1–22 (MAESPTEEAATATAGAGAAGPG). One can recognise a UBC core domain in the interval 101–255 (QCLLRIKRDI…IRHETIRVAV (155 aa)). The active-site Glycyl thioester intermediate is Cys-190. Positions 334-356 (NAEMDSDSSSSGTETDLHGSLRV) are disordered. A Phosphoserine modification is found at Ser-339.

Belongs to the ubiquitin-conjugating enzyme family.

Its subcellular location is the cytoplasm. It localises to the nucleus. The catalysed reaction is S-ubiquitinyl-[E1 ubiquitin-activating enzyme]-L-cysteine + [E2 ubiquitin-conjugating enzyme]-L-cysteine = [E1 ubiquitin-activating enzyme]-L-cysteine + S-ubiquitinyl-[E2 ubiquitin-conjugating enzyme]-L-cysteine.. It functions in the pathway protein modification; protein ubiquitination. Catalyzes the covalent attachment of ubiquitin to other proteins. Specific substrate for UBA6, not charged with ubiquitin by UBE1. May be involved in apoptosis regulation. This Rattus norvegicus (Rat) protein is Ubiquitin-conjugating enzyme E2 Z (Ube2z).